The sequence spans 943 residues: Nuclear factor of activated T-cells, cytoplasmic 1 (943 aa).

The interval 22 to 48 (GRGETLGPAPRAGGTMKSAEEEHYGYA) is disordered. A calcineurin-binding region spans residues 118 to 123 (PRIEIT). The tract at residues 126–218 (LGLYHNNNQF…CVSPKTTDPE (93 aa)) is transactivation domain A (TAD-A). Residues 200–298 (PQTSPWQSPC…GSPRVSVTDD (99 aa)) are disordered. Positions 201–214 (QTSPWQSPCVSPKT) are enriched in polar residues. Repeat copies occupy residues 203-219 (SPWQSPCVSPKTTDPEE) and 233-249 (SPRHSPSTSPRASVTEE). The 3 X SP repeats stretch occupies residues 203-298 (SPWQSPCVSP…GSPRVSVTDD (96 aa)). S233 and S237 each carry phosphoserine. Polar residues predominate over residues 236 to 248 (HSPSTSPRASVTE). S245 is subject to Phosphoserine; by PKA. Positions 265–267 (KRK) match the Nuclear localization signal motif. Position 269 is a phosphoserine; by PKA (S269). The segment covering 276 to 288 (PYSPHHSPTPSPH) has biased composition (pro residues). Copy 3 of the repeat occupies 282 to 298 (SPTPSPHGSPRVSVTDD). S294 is subject to Phosphoserine; by PKA. The short motif at 310 to 321 (SAIVAAINALTT) is the Nuclear export signal element. One can recognise an RHD domain in the interval 410–592 (PTLPALDWQL…NPIECSQRSA (183 aa)). A DNA-binding region spans residues 439-446 (RAHYETEG). The short motif at 682-684 (KRK) is the Nuclear localization signal element. A transactivation domain B (TAD-B) region spans residues 703–943 (TEPTDDYEPA…NDLSSTSTHS (241 aa)). A disordered region spans residues 787–912 (HLGLPQPAGE…SPNLAPIPVT (126 aa)). Residues 846-855 (SPSPPLPPAT) show a composition bias toward pro residues. The Nuclear export signal signature appears at 924–933 (YLDDVNEIIR).

As to quaternary structure, member of the multicomponent NFATC transcription complex that consists of at least two components, a pre-existing cytoplasmic component NFATC2 and an inducible nuclear component NFATC1. Other members such as NFATC4, NFATC3 or members of the activating protein-1 family, MAF, GATA4 and Cbp/p300 can also bind the complex. NFATC proteins bind to DNA as monomers. Interacts with HOMER2 and HOMER3; this interaction may compete with calcineurin/PPP3CA-binding and hence prevent NFATC1 dephosphorylation and activation. Interacts with TLE6/GRG6. In terms of processing, phosphorylated by NFATC-kinase and GSK3B; phosphorylation induces NFATC1 nuclear exit and dephosphorylation by calcineurin promotes nuclear import. Phosphorylation by PKA and DYRK2 negatively modulates nuclear accumulation, and promotes subsequent phosphorylation by GSK3B or casein kinase 1. As to expression, expressed in thymus, peripheral leukocytes as T-cells and spleen. Isoforms A are preferentially expressed in effector T-cells (thymus and peripheral leukocytes) whereas isoforms B and isoforms C are preferentially expressed in naive T-cells (spleen). Isoforms B are expressed in naive T-cells after first antigen exposure and isoforms A are expressed in effector T-cells after second antigen exposure. Isoforms IA are widely expressed but not detected in liver nor pancreas, neural expression is strongest in corpus callosum. Isoforms IB are expressed mostly in muscle, cerebellum, placenta and thymus, neural expression in fetal and adult brain, strongest in corpus callosum.

It localises to the cytoplasm. It is found in the nucleus. Plays a role in the inducible expression of cytokine genes in T-cells, especially in the induction of the IL-2 or IL-4 gene transcription. Also controls gene expression in embryonic cardiac cells. Could regulate not only the activation and proliferation but also the differentiation and programmed death of T-lymphocytes as well as lymphoid and non-lymphoid cells. Required for osteoclastogenesis and regulates many genes important for osteoclast differentiation and function. This Homo sapiens (Human) protein is Nuclear factor of activated T-cells, cytoplasmic 1 (NFATC1).